The sequence spans 663 residues: MKHLVTTALAYTNGPLHLGHARSTYIPADIYTRYLRLKGEEVVHVGGTDNHGVPITLTAEREGVKPIDIVDRYHNAIKADLDSLNVSFDTFGRTHSDIHIETAQEFYSKLKENGYIYEKEIEQFYCEKCDMYLADRYVEGICPFCEGEARGDHCEVCGRHLEPTELVNPYCIHCNSKPEIKRTTHYFFKLSAMQDVLKEYIENSPEMPEHVKNMALRWIEELHDWDVSRNIKWGVPIPGCDDQVMYVWIEAPIGYVSFTKQLGGIWEDYWLENTGDSKISHFIGKDITVHHAVFWPGILKGIGGYKMPNAVVSGGYLTLENKKMSTSKNWVVWVKDFIENFSSDYLRYFFMINAPLNRDTDFSWDDFQKRINTELIDIIGNFTHRTLVFTERKFGSTPIVDSNQLIDEDKKLISKCESTLNRVDSLIREYNFKDALMEIILLAKEGNAYFQGMAPWAIKDDERLKEVMYTCSVALKYIIYLLSSFMPEKTALLLEYMNEELDLEVRGNPLKKPKVIFTKVSDEDISRMKENLLAATKKAETKTDEKSKKVKSGEKMDIIDIDYFGNVDLRVGQILEVEEVPRSKKLYKIIADLGDEKRQIVSGLKGAYEAEELVGKKVIIICNLKPAKLCGVESQGMLLAAEDDSIVSLLALDRDLPVGSKIH.

The short motif at 10-20 (AYTNGPLHLGH) is the 'HIGH' region element. The Zn(2+) site is built by Cys-142, Cys-145, Cys-154, and Cys-157. The 'KMSKS' region motif lies at 323–327 (KMSTS). Thr-326 provides a ligand contact to ATP. The region spanning 563–663 (YFGNVDLRVG…RDLPVGSKIH (101 aa)) is the tRNA-binding domain.

Belongs to the class-I aminoacyl-tRNA synthetase family. MetG type 1 subfamily. In terms of assembly, homodimer. Zn(2+) is required as a cofactor.

The protein localises to the cytoplasm. It carries out the reaction tRNA(Met) + L-methionine + ATP = L-methionyl-tRNA(Met) + AMP + diphosphate. Is required not only for elongation of protein synthesis but also for the initiation of all mRNA translation through initiator tRNA(fMet) aminoacylation. The protein is Methionine--tRNA ligase of Methanococcus maripaludis (strain C7 / ATCC BAA-1331).